Here is a 1327-residue protein sequence, read N- to C-terminus: MTEASEDLAAGESKTAKSRRIIRRATRYVRLLVYAEPTTVDLILLTLGILAAIASGVPFPLMGIIFGQLVDNLNSASCNTDSQRGSAYQSEVNDKALKVVYVGIAYFVLVYIYIASWNLFGERLAQRLRERYFKSLLRQDASFFDNMPAGEAASRLTSDITTIQQGTSEKVGIVLNSVSFFITAYIIAFVKDAKLGGELVSLTPAYLLMSLVGGYYTQKYASAMLKNVAGASSVAMEALSNATIVHAFSANAQLESKFAGLLGNAKVAGIRKAISVAVQSGLLYFIAFSANGLAFWQGSKTIADAVASGNPGSSVGTTYTVIFLLVDGEIFNIKVSSIRQVAPFVQVFDAAGVTFESLEADINREPKIDGTVEGTENSLRNVSGNIELNNVSFAFPSRPDKPVLDNVSMSCAAGQHTAIVGLSGSGKSTVAGLIARLYDPTNGEVSFAGQNIKDLNVRSLRSNLSLVQQEPSLLDRSILENIALGLINSPSHSHLSPALLGGKLSDIATAVRNGRDLMEEAEIHGQETAEIIDMVRNAADLADASAFIGRLKDGYGTLVGSAGSLISGGQKQRISIARSLVKKPKLLILDEATAALDSTSQQRVQSAIEKVMSGRTLISIAHRLSTIKNADNIIVMNQGKVVEQGTHSELISSDGAYAGLVRLQNLNIRPEEENVSSESLATKDSYDNIIEKAAEASLDERRSLETSARKGEDNSDGINAKRSLSSTLKAVGPMLRPHMLFLFLALTSAFVVGGTYSASAVVFGNTIGGLSPCKTADSIRSAGKFYGLMFFILAIIEFFANLGSWSAFGWVAEKITYKVRVLSFRALMEQDLQWHQSDGRSPTVLLSIITQDGNALSGLTGSVVGTIIAILVNLVVAIALSHVIAWKIALVCLAVVPLMLGAGVMRVITMTQFQERHARAFEKSLGITVEAVNSIKTISALSLEHEILRTYRRSLKGPTMEIAQQSAYANLWLAISYGVSNFLYALAYWWGAKRIIAGDYSQTQFFIVLMALLVSAQLWGQMFTLAPDVSRAFTALARILNLLDLGSTKNLSGPCQHLKPGNDLEANAEPREKRPDQSQGGISVSLNNVKFSYPARQDVLVLDGLDIHIKPGQFAALVGPSGAGKSTIVSLIERLYTPTSGSVHIDGQDISAREGVSFRDNIAFVPQDSVLFEGTIRFNVALGARPGHKPTDAEIEEACRLANIHDTIVNLPEGYNTNCGPSGNQLSGGQKQRLAIARALVRKPQLLLLDESTSALDAESEQLLQAGLEKATKGMTVIAIAHRLYTIQKADVIFLIEDGRCTDKGTHAELVERSESYKINALHQAFE.

6 helical membrane passes run 47 to 67, 100 to 120, 170 to 190, 195 to 215, 228 to 248, and 276 to 296; these read LGIL…IIFG, VYVG…WNLF, KVGI…IAFV, LGGE…VGGY, VAGA…VHAF, and VAVQ…LAFW. In terms of domain architecture, ABC transmembrane type-1 1 spans 47-326; that stretch reads LGILAAIASG…TTYTVIFLLV (280 aa). Residues asparagine 381, asparagine 390, and asparagine 406 are each glycosylated (N-linked (GlcNAc...) asparagine). The ABC transporter 1 domain maps to 386–663; that stretch reads IELNNVSFAF…DGAYAGLVRL (278 aa). 421–428 contacts ATP; it reads GLSGSGKS. 2 N-linked (GlcNAc...) asparagine glycosylation sites follow: asparagine 463 and asparagine 674. Helical transmembrane passes span 743-763, 785-805, 859-881, 888-910, 971-991, and 1005-1025; these read FLAL…AVVF, FYGL…LGSW, LTGS…IALS, IALV…VITM, LWLA…YWWG, and FFIV…MFTL. Residues 743-1031 enclose the ABC transmembrane type-1 2 domain; that stretch reads FLALTSAFVV…MFTLAPDVSR (289 aa). Asparagine 1050 carries N-linked (GlcNAc...) asparagine glycosylation. Residues 1054-1081 are disordered; sequence PCQHLKPGNDLEANAEPREKRPDQSQGG. Residues 1084–1323 enclose the ABC transporter 2 domain; it reads VSLNNVKFSY…SESYKINALH (240 aa). 1119–1126 serves as a coordination point for ATP; that stretch reads GPSGAGKS.

Belongs to the ABC transporter superfamily. ABCB family. Multidrug resistance exporter (TC 3.A.1.201) subfamily.

The protein resides in the membrane. Functionally, ABC transporter; part of the gene cluster that mediates the biosynthesis of hydroxamate-containing siderophores that play a critical role in virulence via intracellular iron acquisition during macrophage infection. Probably involved in the excretion of the extracellular siderophores. The protein is ABC transporter 1 of Ajellomyces capsulatus (Darling's disease fungus).